The sequence spans 141 residues: Ribosomal RNA large subunit methyltransferase H (141 aa).

Position 88 (Gly-88) interacts with S-adenosyl-L-methionine.

Belongs to the RNA methyltransferase RlmH family. In terms of assembly, homodimer.

It is found in the cytoplasm. The enzyme catalyses pseudouridine(1915) in 23S rRNA + S-adenosyl-L-methionine = N(3)-methylpseudouridine(1915) in 23S rRNA + S-adenosyl-L-homocysteine + H(+). Its function is as follows. Specifically methylates the pseudouridine at position 1915 (m3Psi1915) in 23S rRNA. This is Ribosomal RNA large subunit methyltransferase H from Novosphingobium aromaticivorans (strain ATCC 700278 / DSM 12444 / CCUG 56034 / CIP 105152 / NBRC 16084 / F199).